We begin with the raw amino-acid sequence, 512 residues long: 23S rRNA (uracil(1939)-C(5))-methyltransferase RlmD (512 aa).

Residues 1-14 are compositionally biased toward low complexity; that stretch reads MQPTDSKTSTSDTT. The disordered stretch occupies residues 1–45; the sequence is MQPTDSKTSTSDTTEQPNETQTITIPPSKKKSKPSSKTRRRLKDA. Residues 15–25 show a composition bias toward polar residues; it reads EQPNETQTITI. Over residues 28-42 the composition is skewed to basic residues; that stretch reads SKKKSKPSSKTRRRL. The TRAM domain maps to 41–113; sequence RLKDAEPLPF…TSFEEGDAVN (73 aa). The [4Fe-4S] cluster site is built by Cys-127, Cys-133, Cys-136, and Cys-215. 6 residues coordinate S-adenosyl-L-methionine: Gln-340, Phe-369, Asn-374, Glu-393, Asp-420, and Asp-441. Residue Cys-467 is the Nucleophile of the active site.

It belongs to the class I-like SAM-binding methyltransferase superfamily. RNA M5U methyltransferase family. RlmD subfamily.

It carries out the reaction uridine(1939) in 23S rRNA + S-adenosyl-L-methionine = 5-methyluridine(1939) in 23S rRNA + S-adenosyl-L-homocysteine + H(+). In terms of biological role, catalyzes the formation of 5-methyl-uridine at position 1939 (m5U1939) in 23S rRNA. The sequence is that of 23S rRNA (uracil(1939)-C(5))-methyltransferase RlmD from Psychrobacter arcticus (strain DSM 17307 / VKM B-2377 / 273-4).